The sequence spans 81 residues: Omega-conotoxin-like Vc6.4 (81 aa).

The first 22 residues, 1 to 22, serve as a signal peptide directing secretion; sequence MKLTCVMIVAVLFLTANTFVTA. A propeptide spanning residues 23–51 is cleaved from the precursor; that stretch reads VPHSSNVLENLYLKARHEMENPEASKLNT. 3 cysteine pairs are disulfide-bonded: Cys-55/Cys-72, Cys-62/Cys-76, and Cys-71/Cys-80.

This sequence belongs to the conotoxin O1 superfamily. Expressed by the venom duct.

Its subcellular location is the secreted. Omega-conotoxins act at presynaptic membranes, they bind and block voltage-gated calcium channels. Act on high voltage-activated (HVA) calcium currents in molluscan neurons. The chain is Omega-conotoxin-like Vc6.4 from Conus victoriae (Queen Victoria cone).